A 287-amino-acid chain; its full sequence is MFEKTRDMDVRCNIEENGRISKPKDNKEIRESQSKMPSTYPAPGSSEGCAKNKSSSAVDPEYCRRILVRDAKGSLREIILPKGLDLDRPKRTRTSFTAEQLYRLEMEFQRCQYVVGRERTELARQLNLSETQVKVWFQNRRTKQKKDQGKDSELRSVVSETAATCSVLRLLEQGRLLSPPGLPGLMPPCTTGTLRAPNSSGPGTTSLPTVTNTHPHQPGLHPSPTGHNIFNMPVPSLLGTVANRLSSHPLTMAGNLQELSARYLSSSAFEPYSRSISKDSLDKKLLD.

The span at 1-33 (MFEKTRDMDVRCNIEENGRISKPKDNKEIRESQ) shows a compositional bias: basic and acidic residues. The disordered stretch occupies residues 1–55 (MFEKTRDMDVRCNIEENGRISKPKDNKEIRESQSKMPSTYPAPGSSEGCAKNKSS). The segment at residues 89 to 148 (PKRTRTSFTAEQLYRLEMEFQRCQYVVGRERTELARQLNLSETQVKVWFQNRRTKQKKDQ) is a DNA-binding region (homeobox).

Belongs to the EMX homeobox family.

The protein resides in the nucleus. Functionally, involved in ventral eye development. This Xenopus laevis (African clawed frog) protein is Ventral anterior homeobox 1b (vax1-b).